The sequence spans 414 residues: Adenylosuccinate synthetase (414 aa).

GTP-binding positions include 12–18 and 40–42; these read GDEGKGK and GHT. The active-site Proton acceptor is D13. Mg(2+) is bound by residues D13 and G40. Residues 13–16, 38–41, T124, R138, Q216, T231, and R297 contribute to the IMP site; these read DEGK and NAGH. The Proton donor role is filled by H41. Residue 293–299 coordinates substrate; that stretch reads STTGRPR. GTP is bound by residues R299, 325 to 327, and 403 to 405; these read KLD and STG.

The protein belongs to the adenylosuccinate synthetase family. As to quaternary structure, homodimer. Requires Mg(2+) as cofactor.

It localises to the cytoplasm. It carries out the reaction IMP + L-aspartate + GTP = N(6)-(1,2-dicarboxyethyl)-AMP + GDP + phosphate + 2 H(+). Its pathway is purine metabolism; AMP biosynthesis via de novo pathway; AMP from IMP: step 1/2. Plays an important role in the de novo pathway of purine nucleotide biosynthesis. Catalyzes the first committed step in the biosynthesis of AMP from IMP. The sequence is that of Adenylosuccinate synthetase from Hydrogenobaculum sp. (strain Y04AAS1).